Here is a 426-residue protein sequence, read N- to C-terminus: Trigger factor (426 aa).

Positions 160-240 (GDTVIGDVTK…IKEVKHLELP (81 aa)) constitute a PPIase FKBP-type domain.

The protein belongs to the FKBP-type PPIase family. Tig subfamily.

Its subcellular location is the cytoplasm. It catalyses the reaction [protein]-peptidylproline (omega=180) = [protein]-peptidylproline (omega=0). In terms of biological role, involved in protein export. Acts as a chaperone by maintaining the newly synthesized protein in an open conformation. Functions as a peptidyl-prolyl cis-trans isomerase. This chain is Trigger factor, found in Chlorobaculum tepidum (strain ATCC 49652 / DSM 12025 / NBRC 103806 / TLS) (Chlorobium tepidum).